A 71-amino-acid chain; its full sequence is Large ribosomal subunit protein bL31 (71 aa).

Residues Cys-16, Cys-18, Cys-37, and Cys-40 each coordinate Zn(2+).

It belongs to the bacterial ribosomal protein bL31 family. Type A subfamily. Part of the 50S ribosomal subunit. The cofactor is Zn(2+).

Binds the 23S rRNA. The chain is Large ribosomal subunit protein bL31 from Serratia proteamaculans (strain 568).